Consider the following 687-residue polypeptide: TWiK family of potassium channels protein 12 (687 aa).

The Cytoplasmic portion of the chain corresponds to 1-21; the sequence is MTLFQKLQWFCQLIRLRAYYK. The chain crosses the membrane as a helical span at residues 22-42; that stretch reads FLLLIAYTLFGAWLFRFYELQ. N-linked (GlcNAc...) asparagine glycans are attached at residues asparagine 53, asparagine 77, and asparagine 98. An intramembrane region (pore-forming) is located at residues 112–132; the sequence is WTWTGAMFYAGQLYTTIGYGY. The helical transmembrane segment at 142–162 threads the bilayer; sequence ICTVLYALFGIPCFLMYLKAI. At 163–212 the chain is on the cytoplasmic side; sequence GKTLSKRLKKIYKRVRRSAFGKFLLPTRVTATKDGFEDPDASAEERKRKP. Residues 213-233 form a helical membrane-spanning segment; it reads FPIPIAIILLIIWICFSASMF. Positions 242–262 form an intramembrane region, pore-forming; that stretch reads FPSAVYFFIVSISTVGLGDML. The chain crosses the membrane as a helical span at residues 270–290; that stretch reads VFNFLLILFGLALLSMCFELI. Topologically, residues 291-687 are cytoplasmic; that stretch reads TDRIAKWKQK…SKRDAPVNIV (397 aa). A disordered region spans residues 661 to 687; that stretch reads SPSTSTSTSMIDSGYDLSKRDAPVNIV. Over residues 677–687 the composition is skewed to basic and acidic residues; the sequence is LSKRDAPVNIV.

This sequence belongs to the two pore domain potassium channel (TC 1.A.1.8) family.

It localises to the membrane. The sequence is that of TWiK family of potassium channels protein 12 from Caenorhabditis briggsae.